Consider the following 456-residue polypeptide: Shufflon protein D' (456 aa).

Positions 1 to 361 are constant region; it reads MKKYDRGWAS…TGAILSCQSG (361 aa). The variable region stretch occupies residues 362-456; sequence TWRKSNSGST…KCSYVVACQN (95 aa).

The polypeptide is Shufflon protein D' (Escherichia coli).